A 254-amino-acid polypeptide reads, in one-letter code: Thiazole synthase (254 aa).

Lysine 96 acts as the Schiff-base intermediate with DXP in catalysis. Residues glycine 157, 183–184 (AG), and 205–206 (NT) contribute to the 1-deoxy-D-xylulose 5-phosphate site.

This sequence belongs to the ThiG family. As to quaternary structure, homotetramer. Forms heterodimers with either ThiH or ThiS.

The protein localises to the cytoplasm. The enzyme catalyses [ThiS sulfur-carrier protein]-C-terminal-Gly-aminoethanethioate + 2-iminoacetate + 1-deoxy-D-xylulose 5-phosphate = [ThiS sulfur-carrier protein]-C-terminal Gly-Gly + 2-[(2R,5Z)-2-carboxy-4-methylthiazol-5(2H)-ylidene]ethyl phosphate + 2 H2O + H(+). The protein operates within cofactor biosynthesis; thiamine diphosphate biosynthesis. Its function is as follows. Catalyzes the rearrangement of 1-deoxy-D-xylulose 5-phosphate (DXP) to produce the thiazole phosphate moiety of thiamine. Sulfur is provided by the thiocarboxylate moiety of the carrier protein ThiS. In vitro, sulfur can be provided by H(2)S. This is Thiazole synthase from Bacillus velezensis (strain DSM 23117 / BGSC 10A6 / LMG 26770 / FZB42) (Bacillus amyloliquefaciens subsp. plantarum).